We begin with the raw amino-acid sequence, 329 residues long: Aspartate--ammonia ligase (329 aa).

This sequence belongs to the class-II aminoacyl-tRNA synthetase family. AsnA subfamily.

The protein localises to the cytoplasm. It carries out the reaction L-aspartate + NH4(+) + ATP = L-asparagine + AMP + diphosphate + H(+). Its pathway is amino-acid biosynthesis; L-asparagine biosynthesis; L-asparagine from L-aspartate (ammonia route): step 1/1. The sequence is that of Aspartate--ammonia ligase from Ureaplasma parvum serovar 3 (strain ATCC 27815 / 27 / NCTC 11736).